The primary structure comprises 463 residues: Formate-nitrite transporter 2 (463 aa).

Residues 1–100 (MCSIPPLRLL…VKKTQLRIDR (100 aa)) lie on the Cytoplasmic side of the membrane. Residues 101-121 (LLLQAFMAGIFVAMAGHCCTV) form a helical membrane-spanning segment. Topologically, residues 122-142 (LAGSYPTDPGDPLAVAKPTQK) are extracellular. A helical transmembrane segment spans residues 143-163 (FIYGALFPVAFICIILTGAEL). At 164–189 (FTGNTMTMLICYFQKRVTMLQLGVNW) the chain is on the cytoplasmic side. Residues 190–210 (LGSLAGNWLGALFGAYFLSYL) form a helical membrane-spanning segment. Residues 211–237 (TGALGDEHVRQFLFRTCVNKISYGWGE) are Extracellular-facing. A helical membrane pass occupies residues 238–258 (CFLRGVGCNTFVCLAVWAVIA). Topologically, residues 259-265 (SENVAGK) are cytoplasmic. Residues 266-286 (VLVMWFPIVAFCVGGYEHIIA) form a helical membrane-spanning segment. Residues 287–305 (NMYTLQAGLMAGAPVAILD) are Extracellular-facing. A helical membrane pass occupies residues 306–326 (VIAFNFLPTLLGNIVGGCLLV). Topologically, residues 327-463 (GAVYAYNFYP…QTAESVAQQV (137 aa)) are cytoplasmic. Residues 424–463 (SGNLSTHARLDLPNRPVEPPSDGLEVTPQSQTAESVAQQV) are disordered. A compositionally biased stretch (polar residues) spans 450-463 (TPQSQTAESVAQQV).

This sequence belongs to the FNT transporter (TC 1.A.16) family. Homopentamer.

The protein resides in the cell membrane. The enzyme catalyses (S)-lactate(in) + H(+)(in) = (S)-lactate(out) + H(+)(out). It carries out the reaction formate(in) + H(+)(in) = formate(out) + H(+)(out). It catalyses the reaction pyruvate(out) + H(+)(out) = pyruvate(in) + H(+)(in). The catalysed reaction is acetate(out) + H(+)(out) = acetate(in) + H(+)(in). Inhibited by p-chloromercuribenzene sulfonate (pCMBS). Methyl methanethiosulfonate (MMTS) inhibits L-lactate but not formate transport. Inhibited by the Malaria Box compound MMV007839. Inhibited by BH-296, BH-317, BH-326 and BH-388 compounds. In terms of biological role, monocarboxylate-proton symporter; active in acidic-to-neutral pH range. Transports L-lactate and formate. This Toxoplasma gondii (strain ATCC 50611 / Me49) protein is Formate-nitrite transporter 2.